A 334-amino-acid chain; its full sequence is Protein-methionine-sulfoxide reductase catalytic subunit MsrP (334 aa).

The tat-type signal signal peptide spans 1–44 (MKKNQFLKESDITAESVFFMKRRQVLKALGISAAALSLPHAAHA). Residues Asn-88, 91–92 (YE), Cys-146, Thr-181, Asn-233, Arg-238, and 249–251 (GIK) each bind Mo-molybdopterin.

The protein belongs to the MsrP family. In terms of assembly, heterodimer of a catalytic subunit (MsrP) and a heme-binding subunit (MsrQ). Mo-molybdopterin is required as a cofactor. In terms of processing, predicted to be exported by the Tat system. The position of the signal peptide cleavage has not been experimentally proven.

It localises to the periplasm. The catalysed reaction is L-methionyl-[protein] + a quinone + H2O = L-methionyl-(S)-S-oxide-[protein] + a quinol. It carries out the reaction L-methionyl-[protein] + a quinone + H2O = L-methionyl-(R)-S-oxide-[protein] + a quinol. Part of the MsrPQ system that repairs oxidized periplasmic proteins containing methionine sulfoxide residues (Met-O), using respiratory chain electrons. Thus protects these proteins from oxidative-stress damage caused by reactive species of oxygen and chlorine generated by the host defense mechanisms. MsrPQ is essential for the maintenance of envelope integrity under bleach stress, rescuing a wide series of structurally unrelated periplasmic proteins from methionine oxidation, including the primary periplasmic chaperone SurA and the lipoprotein Pal. The catalytic subunit MsrP is non-stereospecific, being able to reduce both (R-) and (S-) diastereoisomers of methionine sulfoxide. This chain is Protein-methionine-sulfoxide reductase catalytic subunit MsrP, found in Shigella dysenteriae serotype 1 (strain Sd197).